The chain runs to 861 residues: Leucine--tRNA ligase (861 aa).

A 'HIGH' region motif is present at residues 42–52 (PYPSGRLHMGH). The short motif at 619–623 (KMSKS) is the 'KMSKS' region element. An ATP-binding site is contributed by Lys622.

The protein belongs to the class-I aminoacyl-tRNA synthetase family.

The protein localises to the cytoplasm. The catalysed reaction is tRNA(Leu) + L-leucine + ATP = L-leucyl-tRNA(Leu) + AMP + diphosphate. The sequence is that of Leucine--tRNA ligase from Haemophilus influenzae (strain PittGG).